Consider the following 305-residue polypeptide: Tyrosine recombinase XerD (305 aa).

A Core-binding (CB) domain is found at 3 to 88 (PADASVIERF…TLRAFYGLCL (86 aa)). Positions 109-299 (SLPKALTESQ…ARQHLQKLHA (191 aa)) constitute a Tyr recombinase domain. Active-site residues include arginine 149, lysine 173, histidine 251, arginine 254, and histidine 277. Tyrosine 286 acts as the O-(3'-phospho-DNA)-tyrosine intermediate in catalysis.

The protein belongs to the 'phage' integrase family. XerD subfamily. In terms of assembly, forms a cyclic heterotetrameric complex composed of two molecules of XerC and two molecules of XerD.

The protein localises to the cytoplasm. Functionally, site-specific tyrosine recombinase, which acts by catalyzing the cutting and rejoining of the recombining DNA molecules. The XerC-XerD complex is essential to convert dimers of the bacterial chromosome into monomers to permit their segregation at cell division. It also contributes to the segregational stability of plasmids. The sequence is that of Tyrosine recombinase XerD from Xanthomonas axonopodis pv. citri (strain 306).